The sequence spans 138 residues: Small ribosomal subunit protein uS12 (138 aa).

The tract at residues 33 to 55 is disordered; it reads KEHTNVSSPQKRGVCTRVGTMTP. The residue at position 102 (aspartate 102) is a 3-methylthioaspartic acid.

The protein belongs to the universal ribosomal protein uS12 family. Part of the 30S ribosomal subunit. Contacts proteins S8 and S17. May interact with IF1 in the 30S initiation complex.

Functionally, with S4 and S5 plays an important role in translational accuracy. In terms of biological role, interacts with and stabilizes bases of the 16S rRNA that are involved in tRNA selection in the A site and with the mRNA backbone. Located at the interface of the 30S and 50S subunits, it traverses the body of the 30S subunit contacting proteins on the other side and probably holding the rRNA structure together. The combined cluster of proteins S8, S12 and S17 appears to hold together the shoulder and platform of the 30S subunit. The sequence is that of Small ribosomal subunit protein uS12 from Bacillus velezensis (strain DSM 23117 / BGSC 10A6 / LMG 26770 / FZB42) (Bacillus amyloliquefaciens subsp. plantarum).